A 769-amino-acid chain; its full sequence is 5-methyltetrahydropteroyltriglutamate--homocysteine methyltransferase (769 aa).

5-methyltetrahydropteroyltri-L-glutamate-binding positions include 18-21 (RELK) and lysine 127. L-homocysteine contacts are provided by residues 447 to 449 (IGS) and glutamate 500. Residues 447 to 449 (IGS) and glutamate 500 each bind L-methionine. 5-methyltetrahydropteroyltri-L-glutamate-binding positions include 531-532 (RC) and tryptophan 577. Aspartate 615 contacts L-homocysteine. Aspartate 615 is an L-methionine binding site. A 5-methyltetrahydropteroyltri-L-glutamate-binding site is contributed by glutamate 621. Positions 657, 659, and 681 each coordinate Zn(2+). Histidine 710 serves as the catalytic Proton donor. A Zn(2+)-binding site is contributed by cysteine 742.

The protein belongs to the vitamin-B12 independent methionine synthase family. It depends on Zn(2+) as a cofactor.

The enzyme catalyses 5-methyltetrahydropteroyltri-L-glutamate + L-homocysteine = tetrahydropteroyltri-L-glutamate + L-methionine. The protein operates within amino-acid biosynthesis; L-methionine biosynthesis via de novo pathway; L-methionine from L-homocysteine (MetE route): step 1/1. Functionally, catalyzes the transfer of a methyl group from 5-methyltetrahydrofolate to homocysteine resulting in methionine formation. The protein is 5-methyltetrahydropteroyltriglutamate--homocysteine methyltransferase of Chelativorans sp. (strain BNC1).